A 319-amino-acid polypeptide reads, in one-letter code: Putative ribose-phosphate pyrophosphokinase 2 (319 aa).

Residues D40 to E42 and R99 to Q100 contribute to the ATP site. Position 133 (H133) interacts with Mg(2+). D-ribose 5-phosphate contacts are provided by residues D222 and N226–T230.

It belongs to the ribose-phosphate pyrophosphokinase family. Class I subfamily. As to quaternary structure, homohexamer. The cofactor is Mg(2+).

Its subcellular location is the cytoplasm. It catalyses the reaction D-ribose 5-phosphate + ATP = 5-phospho-alpha-D-ribose 1-diphosphate + AMP + H(+). Its pathway is metabolic intermediate biosynthesis; 5-phospho-alpha-D-ribose 1-diphosphate biosynthesis; 5-phospho-alpha-D-ribose 1-diphosphate from D-ribose 5-phosphate (route I): step 1/1. Involved in the biosynthesis of the central metabolite phospho-alpha-D-ribosyl-1-pyrophosphate (PRPP) via the transfer of pyrophosphoryl group from ATP to 1-hydroxyl of ribose-5-phosphate (Rib-5-P). The sequence is that of Putative ribose-phosphate pyrophosphokinase 2 from Streptococcus pneumoniae serotype 4 (strain ATCC BAA-334 / TIGR4).